Consider the following 29-residue polypeptide: Amelogenin-like protein (29 aa).

The residue at position 16 (S16) is a Phosphoserine.

It belongs to the amelogenin family.

The protein resides in the secreted. Its subcellular location is the extracellular space. It localises to the extracellular matrix. In terms of biological role, tooth enamel proteins are produced in ameloblasts and play a role in biomineralization. In Oryctolagus cuniculus (Rabbit), this protein is Amelogenin-like protein (AMEL).